We begin with the raw amino-acid sequence, 573 residues long: 60 kDa heat shock protein, mitochondrial (573 aa).

A mitochondrion-targeting transit peptide spans 1–26 (MLRLPTVFRQMRPVSRVLAPHLTRAY). K31 carries the N6-succinyllysine modification. Residues S67 and S70 each carry the phosphoserine modification. K75 serves as a coordination point for ATP. N6-acetyllysine is present on K75. K82 carries the post-translational modification N6-acetyllysine; alternate. N6-succinyllysine; alternate is present on K82. Residue K87 is modified to N6-acetyllysine. Y90 carries the phosphotyrosine modification. Residue K91 is modified to N6-acetyllysine. 111-115 (DGTTT) provides a ligand contact to ATP. K125 carries the N6-acetyllysine; alternate modification. An N6-succinyllysine; alternate modification is found at K125. K130 carries the post-translational modification N6-acetyllysine. Residue K133 is modified to N6-acetyllysine; alternate. N6-succinyllysine; alternate is present on K133. At K133 the chain carries N6-malonyllysine; alternate. At K156 the chain carries N6-acetyllysine. Residues K191, K202, K205, K218, and K236 each carry the N6-acetyllysine; alternate modification. N6-succinyllysine; alternate occurs at positions 191, 202, 205, 218, and 236. Residue K249 is modified to N6-acetyllysine. At K250 the chain carries N6-acetyllysine; alternate. K250 is modified (N6-succinyllysine; alternate). N6-acetyllysine is present on residues K269 and K292. At K301 the chain carries N6-succinyllysine. N6-acetyllysine is present on K314. At K352 the chain carries N6-acetyllysine; alternate. K352 bears the N6-succinyllysine; alternate mark. An N6-acetyllysine mark is found at K359 and K389. The residue at position 396 (K396) is an N6-acetyllysine; alternate. N6-succinyllysine; alternate is present on K396. S410 carries the post-translational modification Phosphoserine. Residue G440 participates in ATP binding. The residue at position 469 (K469) is an N6-acetyllysine. Position 481 is an N6-acetyllysine; alternate (K481). K481 is subject to N6-succinyllysine; alternate. S488 carries the phosphoserine modification. ATP is bound at residue D520. K551 participates in a covalent cross-link: Glycyl lysine isopeptide (Lys-Gly) (interchain with G-Cter in SUMO2).

The protein belongs to the chaperonin (HSP60) family. In terms of assembly, homoheptamer arranged in a ring structure. The functional units of these chaperonins consist of heptameric rings of the large subunit Hsp60, which function as a back-to-back double ring. Interacts with 2 heptameric Hsp10 rings to form the symmetrical football complex. Interacts with HRAS. Interacts with ATAD3A. Interacts with ETFBKMT and EEF1AKMT3. Interacts with MFHAS1. As to quaternary structure, (Microbial infection) Interacts with hepatitis B virus/HBV protein X. (Microbial infection) Interacts with HTLV-1 protein p40tax.

It is found in the mitochondrion matrix. It carries out the reaction ATP + H2O + a folded polypeptide = ADP + phosphate + an unfolded polypeptide.. In terms of biological role, chaperonin implicated in mitochondrial protein import and macromolecular assembly. Together with Hsp10, facilitates the correct folding of imported proteins. May also prevent misfolding and promote the refolding and proper assembly of unfolded polypeptides generated under stress conditions in the mitochondrial matrix. The functional units of these chaperonins consist of heptameric rings of the large subunit Hsp60, which function as a back-to-back double ring. In a cyclic reaction, Hsp60 ring complexes bind one unfolded substrate protein per ring, followed by the binding of ATP and association with 2 heptameric rings of the co-chaperonin Hsp10. This leads to sequestration of the substrate protein in the inner cavity of Hsp60 where, for a certain period of time, it can fold undisturbed by other cell components. Synchronous hydrolysis of ATP in all Hsp60 subunits results in the dissociation of the chaperonin rings and the release of ADP and the folded substrate protein. This chain is 60 kDa heat shock protein, mitochondrial (HSPD1), found in Homo sapiens (Human).